A 174-amino-acid chain; its full sequence is Crossover junction endodeoxyribonuclease RuvC (174 aa).

Catalysis depends on residues D8, E67, and D139. Mg(2+) is bound by residues D8, E67, and D139.

The protein belongs to the RuvC family. In terms of assembly, homodimer which binds Holliday junction (HJ) DNA. The HJ becomes 2-fold symmetrical on binding to RuvC with unstacked arms; it has a different conformation from HJ DNA in complex with RuvA. In the full resolvosome a probable DNA-RuvA(4)-RuvB(12)-RuvC(2) complex forms which resolves the HJ. Mg(2+) is required as a cofactor.

Its subcellular location is the cytoplasm. The catalysed reaction is Endonucleolytic cleavage at a junction such as a reciprocal single-stranded crossover between two homologous DNA duplexes (Holliday junction).. Functionally, the RuvA-RuvB-RuvC complex processes Holliday junction (HJ) DNA during genetic recombination and DNA repair. Endonuclease that resolves HJ intermediates. Cleaves cruciform DNA by making single-stranded nicks across the HJ at symmetrical positions within the homologous arms, yielding a 5'-phosphate and a 3'-hydroxyl group; requires a central core of homology in the junction. The consensus cleavage sequence is 5'-(A/T)TT(C/G)-3'. Cleavage occurs on the 3'-side of the TT dinucleotide at the point of strand exchange. HJ branch migration catalyzed by RuvA-RuvB allows RuvC to scan DNA until it finds its consensus sequence, where it cleaves and resolves the cruciform DNA. The polypeptide is Crossover junction endodeoxyribonuclease RuvC (Pseudomonas fluorescens (strain SBW25)).